A 218-amino-acid polypeptide reads, in one-letter code: Ribose-5-phosphate isomerase A (218 aa).

Residues 28–31, 81–84, and 94–97 contribute to the substrate site; these read TGST, DGAD, and KGGG. Glutamate 103 functions as the Proton acceptor in the catalytic mechanism. Lysine 121 contacts substrate.

Belongs to the ribose 5-phosphate isomerase family. In terms of assembly, homodimer.

The enzyme catalyses aldehydo-D-ribose 5-phosphate = D-ribulose 5-phosphate. It functions in the pathway carbohydrate degradation; pentose phosphate pathway; D-ribose 5-phosphate from D-ribulose 5-phosphate (non-oxidative stage): step 1/1. Functionally, catalyzes the reversible conversion of ribose-5-phosphate to ribulose 5-phosphate. The chain is Ribose-5-phosphate isomerase A from Shewanella sediminis (strain HAW-EB3).